We begin with the raw amino-acid sequence, 34 residues long: MSDINATRLPVWIGYSPCVGDDCIALLTRGEGLC.

Residues 1–10 constitute a propeptide that is removed on maturation; sequence MSDINATRLP. A cross-link (cyclopeptide (Val-Pro)) is located at residues 11–17; that stretch reads VWIGYSP. The propeptide occupies 18–34; that stretch reads CVGDDCIALLTRGEGLC.

It belongs to the MSDIN fungal toxin family. Post-translationally, processed by the macrocyclase-peptidase enzyme POPB to yield a toxic cyclic heptapeptide. POPB first removes 10 residues from the N-terminus. Conformational trapping of the remaining peptide forces the enzyme to release this intermediate rather than proceed to macrocyclization. The enzyme rebinds the remaining peptide in a different conformation and catalyzes macrocyclization of the N-terminal 7 residues. In terms of tissue distribution, expressed in basidiocarps.

In terms of biological role, probable toxin that belongs to the MSDIN-like toxin family responsible for a large number of food poisoning cases and deaths. This Amanita exitialis (Guangzhou destroying angel) protein is MSDIN-like toxin proprotein 4.